The chain runs to 436 residues: S-locus-specific glycoprotein S6 (436 aa).

The N-terminal stretch at 1 to 31 is a signal peptide; it reads MKGVRKPYDNSYTLSFLLVFFVLILFCPAFS. Residues 34–156 form the Bulb-type lectin domain; sequence TLSSTESLRI…SNNDASEYLW (123 aa). Residues Asn-46, Asn-64, Asn-114, Asn-121, Asn-245, Asn-261, and Asn-390 are each glycosylated (N-linked (GlcNAc...) asparagine). The PAN domain maps to 351–431; that stretch reads CSGDGFTRMK…HGQDLYVRLA (81 aa). 2 disulfides stabilise this stretch: Cys-381–Cys-406 and Cys-389–Cys-391.

As to expression, stigma.

In terms of biological role, involved in sporophytic self-incompatibility system (the inability of flowering plants to achieve self-fertilization). The chain is S-locus-specific glycoprotein S6 (SLSG) from Brassica oleracea (Wild cabbage).